The chain runs to 47 residues: Protein DVU_0533 (47 aa).

A helical transmembrane segment spans residues 18 to 37; the sequence is WTYILMGVTLLVYVGYWLFL.

It localises to the cell membrane. Its function is as follows. HMWC (high-molecular-weight cytochrome c), ORF2, ORF3, ORF4, ORF5 and ORF6 in the HMC operon form a transmembrane protein complex that allows electron flow from the periplasmic hydrogenase to the cytoplasmic enzymes that catalyze reduction of sulfates. In Nitratidesulfovibrio vulgaris (strain ATCC 29579 / DSM 644 / CCUG 34227 / NCIMB 8303 / VKM B-1760 / Hildenborough) (Desulfovibrio vulgaris), this protein is Protein DVU_0533.